The following is a 318-amino-acid chain: NADH-ubiquinone oxidoreductase chain 1 (318 aa).

Helical transmembrane passes span 2–22 (FLINVLTVTLPILLAVAFLTL), 69–89 (FLFTVAPILALTLALTVWAPL), 102–122 (LLFILAMSSLMVYSILWSGWA), 146–166 (MTTITLSMVLMNGSFTLTAFA), 171–191 (HLWLILPMWPLMMMWFTSTLA), 222–242 (LFFMAEYANIIMMNALTVILF), 253–273 (EISTINFVMKTIILTICFLWV), and 294–314 (LPLTLALCMWHISVLISLACI).

The protein belongs to the complex I subunit 1 family.

Its subcellular location is the mitochondrion inner membrane. It carries out the reaction a ubiquinone + NADH + 5 H(+)(in) = a ubiquinol + NAD(+) + 4 H(+)(out). Functionally, core subunit of the mitochondrial membrane respiratory chain NADH dehydrogenase (Complex I) that is believed to belong to the minimal assembly required for catalysis. Complex I functions in the transfer of electrons from NADH to the respiratory chain. The immediate electron acceptor for the enzyme is believed to be ubiquinone. The polypeptide is NADH-ubiquinone oxidoreductase chain 1 (MT-ND1) (Loxodonta africana (African elephant)).